A 179-amino-acid polypeptide reads, in one-letter code: Fucolectin-4 (179 aa).

The signal sequence occupies residues 1 to 23 (MEVKTIMLLFQILAISTLKQGSA). The interval 31–179 (EENVALRGRA…VEVNALLPVN (149 aa)) is F5/8 type C-like. Residues Asn58, Asp61, Asn63, and Ser72 each coordinate Ca(2+). 3 cysteine pairs are disulfide-bonded: Cys73/Cys168, Cys104/Cys105, and Cys130/Cys146. Residues His75 and Arg101 each coordinate alpha-L-fucose. A Cell attachment site motif is present at residues 101–103 (RGD). Position 108 (Arg108) interacts with alpha-L-fucose. Ca(2+) is bound by residues Cys168 and Glu169.

The protein belongs to the fucolectin family. In terms of assembly, homotrimer. Gill mucous cells.

Its subcellular location is the secreted. In terms of biological role, acts as a defensive agent. Recognizes blood group fucosylated oligosaccharides including A, B, H and Lewis B-type antigens. Does not recognize Lewis A antigen and has low affinity for monovalent haptens. This chain is Fucolectin-4, found in Anguilla japonica (Japanese eel).